The sequence spans 569 residues: Sulfite reductase [NADPH] hemoprotein beta-component (569 aa).

Residues cysteine 433, cysteine 439, cysteine 478, and cysteine 482 each coordinate [4Fe-4S] cluster. Cysteine 482 provides a ligand contact to siroheme.

The protein belongs to the nitrite and sulfite reductase 4Fe-4S domain family. In terms of assembly, alpha(8)-beta(8). The alpha component is a flavoprotein, the beta component is a hemoprotein. It depends on siroheme as a cofactor. The cofactor is [4Fe-4S] cluster.

It carries out the reaction hydrogen sulfide + 3 NADP(+) + 3 H2O = sulfite + 3 NADPH + 4 H(+). It participates in sulfur metabolism; hydrogen sulfide biosynthesis; hydrogen sulfide from sulfite (NADPH route): step 1/1. Component of the sulfite reductase complex that catalyzes the 6-electron reduction of sulfite to sulfide. This is one of several activities required for the biosynthesis of L-cysteine from sulfate. The protein is Sulfite reductase [NADPH] hemoprotein beta-component of Shewanella sediminis (strain HAW-EB3).